We begin with the raw amino-acid sequence, 1531 residues long: MEYFLGGYVYMNGDALKIQPPVYTNVPVETAMLATNLFGATTQIAASPAAAAAAHIPLITAAAAAAAAAGAPAVAPPVAVAPVATASAAQAAVVPAQQQQQAHPHQAQILAHTHVAHQQQQQQQQQTIQQHLHQQQQQQSPHPAQHLTYGHQPALSQATAGGSGTISGGAVGPSGVVVEGQDTNEYAIMNGALGQTQDGTVVCYTTDALNNTNLVALDPQPHQIVVPVQVPVQVPVPVQLPANGSADPQQGSHNAAGGEEPNIPLDKLKQMLATQLEYYFSRENLANDTYLLSQMDSDQYVPIYTVARFNLVRKLTNDINLITEVLRESPNVQVDDKGLRVRPNRKRCIIILREISNNTPLDDVKALFSNESCPRPISCEFAANNSWYITFESDEDAQKAYKYLREEVKEFQGKPIMARIKPKSFINRIQAVPKNGYRLTSPPTANVFDPAGAGGATVSYAAAQQPRYLYTNGAAIAAPASVQYSNPVLIPIPQNQFYPGLVAGPWPPGTVAATTAHGQNFYELGGNIFTTNPLPPQPVTAGFAQAPPPTSQAMVTPKPQGGGRYNNNHRGNPNNVGGANSGPRAESRSKPPRSTPSASHIQGGNIMPIQITAPIPGGMVSVVPTNIVQDPLQPAPLQQQPQQVIQQIQQQPSSSAQQQQAATVQMNNTTRHYPIKSNWKGGMQKNLDKSYSGGVATHHHYTTQVQALPAHSHHLQAQQQLQGQTQQQHYQLASSSAASAPQVTYVTTAPAPQQPGQHQHHLVVQQTQPQQQQQQQQVVLQQQQVQVQELQEAGDGVEHSSHAMQQVNRSSNMSASSSSSLATSMSKEPLQWQNRPRRRRRDEEGGINYSPGGRVGLYGSSPSNPHPQQHLMSSSTGSNVQSAGGTDGGGASHRGGERQSHYNTIHDVPPPQHRGNYKGNNYNPHYHAQHSSMASGSHHHHHHNALSSQQQQHHLTTGTGQQGSGHHYHHHHHHNSIGSNVGNSGGLGVSSGGSGGGGSGGGSGSNSLSGGSNERGIHHSSLGYQGHQHQHQQQQQQQQQQQQQQPAAPVQPPQFDLEDAAFPPLPATSATAPHTPQATGGASLHNSTTSSSSSTGLGQKQTLHQQQQQAPQQHQVLSSSVESAGGDEQRSSNQQGIETSNIHLANSSTANNWVENRLSDVVRTGGGGGGGGKGKARKDNRHPQGQNQPHMAPNYQQHQPRNPPVSPTPALGAEYGIQIQEGNNTKNVTKQSSSNNNSIHVIKCQTPNINASSKEEAAGAQQQQQQQLDKSNKTEDEMHPKQPSQQRLVEGYVQQQQLPLLAAHNEYSAALAAGAGACSVVEGGLTTSLAECSLGQHKKPPSVAALHAKKDANLLEKGASKHKSVATSTSTENLSAAATASKLSYAQVAQHHKAAASSDSKETGSGGSTGTLSPTGSHKMDLVFGDPAVVVAAVEKSGLATVSTEKRVAGGASPAALIGKPAGGLPATNTTQGSSAVVVSAKEKDNRPNASVRPLSKEKQQQHYGSATEHNTNANIGLGASGNRKSRANNS.

Residues 112–147 (HTHVAHQQQQQQQQQTIQQHLHQQQQQQSPHPAQHL) are compositionally biased toward low complexity. 2 disordered regions span residues 112-148 (HTHV…QHLT) and 239-263 (QLPA…EPNI). An HTH La-type RNA-binding domain is found at 262-351 (NIPLDKLKQM…RPNRKRCIII (90 aa)). Positions 348–423 (CIIILREISN…KPIMARIKPK (76 aa)) constitute an RRM domain. Disordered stretches follow at residues 533-605 (PLPP…QGGN), 710-736 (AHSH…ASSS), 748-768 (TAPA…QQTQ), 791-1135 (QEAG…SNQQ), 1160-1211 (DVVR…TPAL), and 1251-1285 (ASSK…QPSQ). The span at 565–578 (YNNNHRGNPNNVGG) shows a compositional bias: low complexity. Composition is skewed to low complexity over residues 754–768 (QPGQ…QQTQ) and 810–826 (SSNM…TSMS). Residues 860–884 (SSPSNPHPQQHLMSSSTGSNVQSAG) are compositionally biased toward polar residues. A compositionally biased stretch (low complexity) spans 945 to 959 (ALSSQQQQHHLTTGT). Over residues 966 to 975 (HHYHHHHHHN) the composition is skewed to basic residues. The segment covering 983 to 1004 (NSGGLGVSSGGSGGGGSGGGSG) has biased composition (gly residues). Over residues 1031 to 1045 (HQQQQQQQQQQQQQQ) the composition is skewed to low complexity. Residues 1068–1086 (TSATAPHTPQATGGASLHN) are compositionally biased toward polar residues. The segment covering 1087-1115 (STTSSSSSTGLGQKQTLHQQQQQAPQQHQ) has biased composition (low complexity). Phosphoserine is present on Ser1123. Gly residues predominate over residues 1164–1173 (TGGGGGGGGK). A compositionally biased stretch (polar residues) spans 1183 to 1200 (PQGQNQPHMAPNYQQHQP). Residues 1270–1280 (KSNKTEDEMHP) show a composition bias toward basic and acidic residues. A phosphoserine mark is found at Ser1370 and Ser1413. 2 disordered regions span residues 1393 to 1418 (KAAA…TGSH) and 1450 to 1531 (GGAS…ANNS). Polar residues-rich tracts occupy residues 1467–1477 (ATNTTQGSSAV) and 1502–1515 (QHYG…TNAN).

Its function is as follows. Probable RNA binding protein. Negatively regulates myc at the protein level, via an unknown mechanism, and may therefore have a role in growth. Has no effect on myc mRNA levels. This chain is La-related protein Larp4B, found in Drosophila melanogaster (Fruit fly).